Here is a 40-residue protein sequence, read N- to C-terminus: 67 kDa serum albumin (40 aa).

An Albumin domain is found at 1 to 40 (DAEHKSEIVHRFNDLKEEKFKGAALITFAQFLHKKPEEEA). H4 contributes to the Cu cation binding site.

This sequence belongs to the ALB/AFP/VDB family. Plasma.

It is found in the secreted. Serum albumin, the main protein of plasma, has a good binding capacity for water, Ca(2+), Na(+), K(+), fatty acids, hormones, bilirubin and drugs. Its main function is the regulation of the colloidal osmotic pressure of blood. The chain is 67 kDa serum albumin from Trachemys scripta (Red-eared slider turtle).